A 344-amino-acid chain; its full sequence is MMVIRPVERSDVSALMQLASKTGGGLTSLPANEATLSARIERAIKTWQGELPKSEQGYVFVLEDSETGTVAGICAIEVAVGLNDPWHNYRVGTLVHASKELNVYNALPTLFLSNDHTGSSELCTLFLDPDWRKEGNGYLLSKSRFMFMAAFRDKFNDKVVAEMRGVIDEHGYSPFWQSLGKRFFSMDFSRADFLCGTGQKAFIAELMPKHPIYTHFLSQEAQDVIGQVHPQTAPARAVLEKEGFRYRNYIDIFDGGPTLECDIDRVRAIRKSRLVEVAEGQPAQGDFPACLVANENYHHFRVVLARTDPATERLILTAAQLDALKCHAGDRVRLVRLCAVEKTA.

L125 provides a ligand contact to succinyl-CoA. H229 functions as the Proton donor in the catalytic mechanism.

It belongs to the arginine N-succinyltransferase family.

It carries out the reaction succinyl-CoA + L-arginine = N(2)-succinyl-L-arginine + CoA + H(+). Its pathway is amino-acid degradation; L-arginine degradation via AST pathway; L-glutamate and succinate from L-arginine: step 1/5. In terms of biological role, catalyzes the transfer of succinyl-CoA to arginine to produce N(2)-succinylarginine. In Shigella boydii serotype 4 (strain Sb227), this protein is Arginine N-succinyltransferase.